We begin with the raw amino-acid sequence, 360 residues long: Peptide chain release factor 1 (360 aa).

Q235 is subject to N5-methylglutamine. Residues 285–295 (RQAAEQTDMRR) show a composition bias toward basic and acidic residues. The interval 285 to 309 (RQAAEQTDMRRNLLGSGDRSDKIRT) is disordered.

It belongs to the prokaryotic/mitochondrial release factor family. In terms of processing, methylated by PrmC. Methylation increases the termination efficiency of RF1.

It is found in the cytoplasm. In terms of biological role, peptide chain release factor 1 directs the termination of translation in response to the peptide chain termination codons UAG and UAA. In Haemophilus influenzae (strain 86-028NP), this protein is Peptide chain release factor 1.